The chain runs to 180 residues: Oligoribonuclease (180 aa).

An Exonuclease domain is found at 7–168; sequence LVWIDLEMTG…QDIRDSIDEL (162 aa). Residue Tyr128 is part of the active site.

The protein belongs to the oligoribonuclease family.

It localises to the cytoplasm. 3'-to-5' exoribonuclease specific for small oligoribonucleotides. The polypeptide is Oligoribonuclease (Dichelobacter nodosus (strain VCS1703A)).